A 124-amino-acid chain; its full sequence is MPTINQLVRKGRTPKVKKTKAPALNGSPMRRGVCTRVYTTTPKKPNSALRKVARVRLNGGVEVTAYIPGVGHNLQEHSIVLVRGGRVKDLPGVRYKIVRGALDTQGVKNRKQARSRYGAKMEKK.

D89 bears the 3-methylthioaspartic acid mark.

The protein belongs to the universal ribosomal protein uS12 family. Part of the 30S ribosomal subunit. Contacts proteins S8 and S17. May interact with IF1 in the 30S initiation complex.

Functionally, with S4 and S5 plays an important role in translational accuracy. Interacts with and stabilizes bases of the 16S rRNA that are involved in tRNA selection in the A site and with the mRNA backbone. Located at the interface of the 30S and 50S subunits, it traverses the body of the 30S subunit contacting proteins on the other side and probably holding the rRNA structure together. The combined cluster of proteins S8, S12 and S17 appears to hold together the shoulder and platform of the 30S subunit. The sequence is that of Small ribosomal subunit protein uS12 from Arthrobacter sp. (strain FB24).